We begin with the raw amino-acid sequence, 448 residues long: Divalent metal cation transporter MntH (448 aa).

The next 11 helical transmembrane spans lie at Leu-41–Trp-61, Ser-69–Leu-89, Gly-117–Ile-137, Phe-147–Phe-167, Ile-176–Val-196, Ile-215–Pro-235, Phe-270–Phe-290, Leu-307–Ala-327, Val-363–Glu-383, Leu-384–Val-404, and Ile-424–Thr-444.

It belongs to the NRAMP family.

The protein localises to the cell membrane. In terms of biological role, h(+)-stimulated, divalent metal cation uptake system. The sequence is that of Divalent metal cation transporter MntH from Listeria welshimeri serovar 6b (strain ATCC 35897 / DSM 20650 / CCUG 15529 / CIP 8149 / NCTC 11857 / SLCC 5334 / V8).